The chain runs to 643 residues: MNANPKFLSADAHVDAAAVAPLPNSRKVYVTGSQPDIRVPMREITQADTPTGFGGEKNPPIYVYDTSGPYTDPDAKIDIRAGLPALRQRWIEARGDTETLPGLSSQYGRERAADPATADLRFPGLHRNPRRARAGKNVTQMHYARQGIITPEMEFIAIRENQRRAEYLESLKASGPNGAKLAAMMGRQHPGQAFGAAAFGGNAPSEITPEFVRDEVARGRAIIPANINHPESEPMIIGRNFLVKINANIGNSAVTSSIGEEVDKMTWAIRWGGDTVMDLSTGKHIHETREWIIRNSPVPIGTVPIYQALEKVNGKAEELTWEIFRDTLIEQAEQGVDYFTIHAGVRLQYVPLTANRMTGIVSRGGSIMAKWCLAHHKESFLYEHFEEICEIMKAYDVSFSLGDGLRPGSIYDANDEAQLGELKTLGELTQIAWKHDVQVMIEGPGHVPMQLIKENMDLQLDWCKEAPFYTLGPLTTDIAPGYDHITSGIGAAMIGWFGTAMLCYVTPKEHLGLPNKDDVKEGIITYKLAAHAADLAKGHPGAQVRDNALSKARFEFRWEDQFNLGLDPDKAREFHDETLPKDSAKVAHFCSMCGPHFCSMKITQDVREFAAQQGVSEADALQKGMEVKAVEFVKSGSEIYHRQ.

Substrate is bound by residues Asn248, Met277, Tyr306, His342, 362-364, 403-406, and Glu442; these read SRG and DGLR. His446 lines the Zn(2+) pocket. Tyr469 is a binding site for substrate. His510 is a binding site for Zn(2+). Residues Cys590, Cys593, and Cys598 each contribute to the [4Fe-4S] cluster site.

This sequence belongs to the ThiC family. In terms of assembly, homodimer. [4Fe-4S] cluster serves as cofactor.

The enzyme catalyses 5-amino-1-(5-phospho-beta-D-ribosyl)imidazole + S-adenosyl-L-methionine = 4-amino-2-methyl-5-(phosphooxymethyl)pyrimidine + CO + 5'-deoxyadenosine + formate + L-methionine + 3 H(+). Its pathway is cofactor biosynthesis; thiamine diphosphate biosynthesis. Catalyzes the synthesis of the hydroxymethylpyrimidine phosphate (HMP-P) moiety of thiamine from aminoimidazole ribotide (AIR) in a radical S-adenosyl-L-methionine (SAM)-dependent reaction. This Burkholderia multivorans (strain ATCC 17616 / 249) protein is Phosphomethylpyrimidine synthase.